The sequence spans 348 residues: D-alanine--D-alanine ligase (348 aa).

The ATP-grasp domain maps to 132-334 (KQVLATVGVP…YSDLIEKLVM (203 aa)). Residue 162-217 (LETLSFPIFVKPANMGSSVGISKATDESSLRSAIDLALKYDSRILIEQGVTAREIE) participates in ATP binding. 3 residues coordinate Mg(2+): aspartate 288, glutamate 301, and asparagine 303.

It belongs to the D-alanine--D-alanine ligase family. It depends on Mg(2+) as a cofactor. Requires Mn(2+) as cofactor.

The protein localises to the cytoplasm. The catalysed reaction is 2 D-alanine + ATP = D-alanyl-D-alanine + ADP + phosphate + H(+). The protein operates within cell wall biogenesis; peptidoglycan biosynthesis. Cell wall formation. This chain is D-alanine--D-alanine ligase, found in Streptococcus agalactiae serotype Ia (strain ATCC 27591 / A909 / CDC SS700).